The following is a 247-amino-acid chain: Coproheme decarboxylase (247 aa).

Residues Arg129, 143–147 (YPMDK), His170, Gln183, and Ser221 each bind Fe-coproporphyrin III. Tyr143 is an active-site residue.

It belongs to the ChdC family. Type 1 subfamily. The cofactor is Fe-coproporphyrin III.

The catalysed reaction is Fe-coproporphyrin III + 2 H2O2 + 2 H(+) = heme b + 2 CO2 + 4 H2O. It carries out the reaction Fe-coproporphyrin III + H2O2 + H(+) = harderoheme III + CO2 + 2 H2O. The enzyme catalyses harderoheme III + H2O2 + H(+) = heme b + CO2 + 2 H2O. The protein operates within porphyrin-containing compound metabolism; protoheme biosynthesis. Its function is as follows. Involved in coproporphyrin-dependent heme b biosynthesis. Catalyzes the decarboxylation of Fe-coproporphyrin III (coproheme) to heme b (protoheme IX), the last step of the pathway. The reaction occurs in a stepwise manner with a three-propionate intermediate. The protein is Coproheme decarboxylase of Bacillus mycoides (strain KBAB4) (Bacillus weihenstephanensis).